Reading from the N-terminus, the 437-residue chain is Ribosomal protein uS12 methylthiotransferase RimO (437 aa).

An MTTase N-terminal domain is found at 4–114 (PRISFVSLGC…VIEAVHTAIP (111 aa)). Residues Cys-13, Cys-49, Cys-78, Cys-145, Cys-149, and Cys-152 each contribute to the [4Fe-4S] cluster site. The region spanning 131-369 (LTPRHYAYLK…MAKQQQISTH (239 aa)) is the Radical SAM core domain. The region spanning 372 to 437 (KKKIGKRLQV…DAYDLYGIAV (66 aa)) is the TRAM domain.

The protein belongs to the methylthiotransferase family. RimO subfamily. [4Fe-4S] cluster serves as cofactor.

Its subcellular location is the cytoplasm. It catalyses the reaction L-aspartate(89)-[ribosomal protein uS12]-hydrogen + (sulfur carrier)-SH + AH2 + 2 S-adenosyl-L-methionine = 3-methylsulfanyl-L-aspartate(89)-[ribosomal protein uS12]-hydrogen + (sulfur carrier)-H + 5'-deoxyadenosine + L-methionine + A + S-adenosyl-L-homocysteine + 2 H(+). Catalyzes the methylthiolation of an aspartic acid residue of ribosomal protein uS12. The polypeptide is Ribosomal protein uS12 methylthiotransferase RimO (Bartonella tribocorum (strain CIP 105476 / IBS 506)).